Reading from the N-terminus, the 154-residue chain is Universal stress protein Sll1388 (154 aa).

It belongs to the universal stress protein A family.

The protein is Universal stress protein Sll1388 of Synechocystis sp. (strain ATCC 27184 / PCC 6803 / Kazusa).